We begin with the raw amino-acid sequence, 607 residues long: UvrABC system protein C (607 aa).

One can recognise a GIY-YIG domain in the interval 19 to 97; that stretch reads TLSGVYQMRD…IKQYQPKFNI (79 aa). The region spanning 205–240 is the UVR domain; that stretch reads EHLLQTLTEHMLQASAAQQYERAAIVRDQISELRTI.

It belongs to the UvrC family. Interacts with UvrB in an incision complex.

It is found in the cytoplasm. Its function is as follows. The UvrABC repair system catalyzes the recognition and processing of DNA lesions. UvrC both incises the 5' and 3' sides of the lesion. The N-terminal half is responsible for the 3' incision and the C-terminal half is responsible for the 5' incision. This is UvrABC system protein C from Dichelobacter nodosus (strain VCS1703A).